The chain runs to 342 residues: Phenylalanine--tRNA ligase alpha subunit (342 aa).

Glutamate 260 is a binding site for Mg(2+).

It belongs to the class-II aminoacyl-tRNA synthetase family. Phe-tRNA synthetase alpha subunit type 1 subfamily. As to quaternary structure, tetramer of two alpha and two beta subunits. It depends on Mg(2+) as a cofactor.

The protein localises to the cytoplasm. It catalyses the reaction tRNA(Phe) + L-phenylalanine + ATP = L-phenylalanyl-tRNA(Phe) + AMP + diphosphate + H(+). This chain is Phenylalanine--tRNA ligase alpha subunit, found in Mycobacterium avium (strain 104).